The sequence spans 181 residues: Crossover junction endodeoxyribonuclease RuvC (181 aa).

Residues Asp-8, Glu-67, and Asp-139 contribute to the active site. Mg(2+)-binding residues include Asp-8, Glu-67, and Asp-139.

This sequence belongs to the RuvC family. Homodimer which binds Holliday junction (HJ) DNA. The HJ becomes 2-fold symmetrical on binding to RuvC with unstacked arms; it has a different conformation from HJ DNA in complex with RuvA. In the full resolvosome a probable DNA-RuvA(4)-RuvB(12)-RuvC(2) complex forms which resolves the HJ. Requires Mg(2+) as cofactor.

It localises to the cytoplasm. The enzyme catalyses Endonucleolytic cleavage at a junction such as a reciprocal single-stranded crossover between two homologous DNA duplexes (Holliday junction).. In terms of biological role, the RuvA-RuvB-RuvC complex processes Holliday junction (HJ) DNA during genetic recombination and DNA repair. Endonuclease that resolves HJ intermediates. Cleaves cruciform DNA by making single-stranded nicks across the HJ at symmetrical positions within the homologous arms, yielding a 5'-phosphate and a 3'-hydroxyl group; requires a central core of homology in the junction. The consensus cleavage sequence is 5'-(A/T)TT(C/G)-3'. Cleavage occurs on the 3'-side of the TT dinucleotide at the point of strand exchange. HJ branch migration catalyzed by RuvA-RuvB allows RuvC to scan DNA until it finds its consensus sequence, where it cleaves and resolves the cruciform DNA. This chain is Crossover junction endodeoxyribonuclease RuvC, found in Acinetobacter baylyi (strain ATCC 33305 / BD413 / ADP1).